The sequence spans 410 residues: Inositol hexakisphosphate kinase 3 (410 aa).

211-219 lines the substrate pocket; it reads PCVLDLKMG. The tract at residues 333 to 358 is disordered; the sequence is QEPPERAPGSPHPHEAPQAAHGSSPG.

The protein belongs to the inositol phosphokinase (IPK) family. Detected in brain.

It is found in the cytoplasm. It catalyses the reaction 1D-myo-inositol hexakisphosphate + ATP = 5-diphospho-1D-myo-inositol 1,2,3,4,6-pentakisphosphate + ADP. It carries out the reaction 1-diphospho-1D-myo-inositol 2,3,4,5,6-pentakisphosphate + ATP + H(+) = 1,5-bis(diphospho)-1D-myo-inositol 2,3,4,6-tetrakisphosphate + ADP. In terms of biological role, converts inositol hexakisphosphate (InsP6) to diphosphoinositol pentakisphosphate (InsP7/PP-InsP5). Converts 1,3,4,5,6-pentakisphosphate (InsP5) to PP-InsP4. The sequence is that of Inositol hexakisphosphate kinase 3 (IP6K3) from Homo sapiens (Human).